A 275-amino-acid chain; its full sequence is Small ribosomal subunit protein uS2 (275 aa).

Residues 226–275 are disordered; that stretch reads AAAPNSASVREEEFSAEAGDEGKGRRAPAKKATEKKADAPAAAPEAPAAE. Residues 264–275 are compositionally biased toward low complexity; that stretch reads APAAAPEAPAAE.

It belongs to the universal ribosomal protein uS2 family.

The chain is Small ribosomal subunit protein uS2 from Xanthomonas campestris pv. campestris (strain ATCC 33913 / DSM 3586 / NCPPB 528 / LMG 568 / P 25).